The sequence spans 282 residues: HTH-type transcriptional activator RhaR (282 aa).

Positions 179-277 (DKLITALANS…GMTPSQWRHL (99 aa)) constitute an HTH araC/xylS-type domain. DNA-binding regions (H-T-H motif) lie at residues 196–217 (DAFCQQEQCSERVLRQQFRAQT) and 244–267 (ISEISMQCGFEDSNYFSVVFTRET).

As to quaternary structure, binds DNA as a dimer.

It localises to the cytoplasm. Functionally, activates expression of the rhaSR operon in response to L-rhamnose. This is HTH-type transcriptional activator RhaR from Salmonella agona (strain SL483).